Consider the following 162-residue polypeptide: Protein SLM4 (162 aa).

A helical membrane pass occupies residues 127–144 (LLLLFIAEGSFPYGLLVI).

As to quaternary structure, component of the GSE complex composed of GTR1, GTR2, SLM4, MEH1 and LTV1. Component of the EGO complex, at least composed of GTR2, SLM4 and MEH1.

It is found in the vacuole membrane. Component of the GSE complex, a GTPase complex required for intracellular sorting of GAP1 out of the endosome. Component of the EGO complex, a complex involved in the regulation of microautophagy. This Saccharomyces cerevisiae (strain ATCC 204508 / S288c) (Baker's yeast) protein is Protein SLM4 (SLM4).